The primary structure comprises 379 residues: Cytochrome b (379 aa).

A run of 4 helical transmembrane segments spans residues 33–53, 77–98, 113–133, and 178–198; these read FGSL…FLAM, WLIR…SIHA, WNIG…GYVL, and FFAF…VHLL. 2 residues coordinate heme b: histidine 83 and histidine 97. The heme b site is built by histidine 182 and histidine 196. Histidine 201 lines the a ubiquinone pocket. Transmembrane regions (helical) follow at residues 226-246, 288-308, 320-340, and 347-367; these read IKDL…ALFF, LGGV…PLLN, ITQT…WIGG, and FTMI…ILMP.

This sequence belongs to the cytochrome b family. The cytochrome bc1 complex contains 11 subunits: 3 respiratory subunits (MT-CYB, CYC1 and UQCRFS1), 2 core proteins (UQCRC1 and UQCRC2) and 6 low-molecular weight proteins (UQCRH/QCR6, UQCRB/QCR7, UQCRQ/QCR8, UQCR10/QCR9, UQCR11/QCR10 and a cleavage product of UQCRFS1). This cytochrome bc1 complex then forms a dimer. The cofactor is heme b.

It is found in the mitochondrion inner membrane. In terms of biological role, component of the ubiquinol-cytochrome c reductase complex (complex III or cytochrome b-c1 complex) that is part of the mitochondrial respiratory chain. The b-c1 complex mediates electron transfer from ubiquinol to cytochrome c. Contributes to the generation of a proton gradient across the mitochondrial membrane that is then used for ATP synthesis. In Thaptomys nigrita (Blackish grass mouse), this protein is Cytochrome b (MT-CYB).